Here is a 439-residue protein sequence, read N- to C-terminus: 26S proteasome regulatory subunit 6A (439 aa).

M1 is subject to N-acetylmethionine. S9 carries the post-translational modification Phosphoserine. Residue 227 to 234 participates in ATP binding; the sequence is GPPGTGKT. Position 376 is a phosphoserine (S376).

This sequence belongs to the AAA ATPase family. In terms of assembly, component of the 19S proteasome regulatory particle complex. The 26S proteasome consists of a 20S core particle (CP) and two 19S regulatory subunits (RP). The regulatory particle is made of a lid composed of 9 subunits, a base containing 6 ATPases including PSMC3 and few additional components. Interacts with PAAF1.

It is found in the cytoplasm. The protein resides in the nucleus. In terms of biological role, component of the 26S proteasome, a multiprotein complex involved in the ATP-dependent degradation of ubiquitinated proteins. This complex plays a key role in the maintenance of protein homeostasis by removing misfolded or damaged proteins, which could impair cellular functions, and by removing proteins whose functions are no longer required. Therefore, the proteasome participates in numerous cellular processes, including cell cycle progression, apoptosis, or DNA damage repair. PSMC3 belongs to the heterohexameric ring of AAA (ATPases associated with diverse cellular activities) proteins that unfolds ubiquitinated target proteins that are concurrently translocated into a proteolytic chamber and degraded into peptides. This Rattus norvegicus (Rat) protein is 26S proteasome regulatory subunit 6A (Psmc3).